Here is a 299-residue protein sequence, read N- to C-terminus: Small ribosomal subunit protein uS2 (299 aa).

The disordered stretch occupies residues 227–299; it reads SERKSEKSTK…DKAKASNEEE (73 aa).

Belongs to the universal ribosomal protein uS2 family.

This chain is Small ribosomal subunit protein uS2, found in Christiangramia forsetii (strain DSM 17595 / CGMCC 1.15422 / KT0803) (Gramella forsetii).